The chain runs to 195 residues: ATP-dependent Clp protease proteolytic subunit (195 aa).

Ser94 functions as the Nucleophile in the catalytic mechanism. Residue His119 is part of the active site.

This sequence belongs to the peptidase S14 family. In terms of assembly, component of the chloroplastic Clp protease core complex.

It localises to the plastid. The protein localises to the chloroplast stroma. The enzyme catalyses Hydrolysis of proteins to small peptides in the presence of ATP and magnesium. alpha-casein is the usual test substrate. In the absence of ATP, only oligopeptides shorter than five residues are hydrolyzed (such as succinyl-Leu-Tyr-|-NHMec, and Leu-Tyr-Leu-|-Tyr-Trp, in which cleavage of the -Tyr-|-Leu- and -Tyr-|-Trp bonds also occurs).. In terms of biological role, cleaves peptides in various proteins in a process that requires ATP hydrolysis. Has a chymotrypsin-like activity. Plays a major role in the degradation of misfolded proteins. The protein is ATP-dependent Clp protease proteolytic subunit of Cycas taitungensis (Prince sago).